The following is a 629-amino-acid chain: Polyadenylate-binding protein 2 (629 aa).

Residues 1 to 12 show a composition bias toward polar residues; it reads MAQVQLQGQTPN. The tract at residues 1-25 is disordered; sequence MAQVQLQGQTPNGSTAAVTSAPATS. The span at 13–25 shows a compositional bias: low complexity; it reads GSTAAVTSAPATS. 4 consecutive RRM domains span residues 36–114, 124–201, 215–292, and 318–395; these read TSLY…YSHR, GNIF…PFLR, TNVY…RAQK, and SNLY…IAQR. The segment at 480 to 507 is disordered; sequence PQQQRPGGGRRPGGIQHSQQQNPMMQQQ. Residues 492–507 are compositionally biased toward low complexity; sequence GGIQHSQQQNPMMQQQ. Positions 539 to 616 constitute a PABC domain; that stretch reads TIGALASNLS…AMDVLRSVAA (78 aa).

This sequence belongs to the polyadenylate-binding protein type-1 family. In terms of assembly, interacts with eIF-iso4G. Interacts with ERD15/CID1 and CID7. Interacts with Turnip mosaic virus (TuMV) VPg-Pro and RNA-dependent RNA polymerase (RdRp). As to expression, expressed in all organs (at the protein level) but under distinct spatial and temporal regulation within each organ.

Its subcellular location is the cytoplasm. The protein localises to the nucleus. Its function is as follows. Binds the poly(A) tail of mRNA. Appears to be an important mediator of the multiple roles of the poly(A) tail in mRNA biogenesis, stability and translation. In the cytoplasm, affects both translation and mRNA decay. Stimulates translation by interaction with translation initiation factor eIF4G, a subunit of the cap-binding complex eIF4F, bringing the 5'- and 3'-ends of the mRNA in proximity. The formation of this circular mRNP structure appears to be critical for the synergistic effects of the cap and the poly(A) tail in facilitating translation initiation, recycling of ribosomes, and mRNA stability. During infection with potyvirus TuMV, acts as a potential integral component of the viral replicase complex that could play an important role in the regulation of potyviral RNA-dependent RNA polymerase (RdRp). Binds to uridylated mRNAs and determines the size of uridine extensions. Limits uridine extension by URT1, likely by binding to the oligo(A) tail and preventing URT1 access. This Arabidopsis thaliana (Mouse-ear cress) protein is Polyadenylate-binding protein 2 (PAB2).